The chain runs to 259 residues: Autophagy-related protein 27 (259 aa).

An N-terminal signal peptide occupies residues 1–15 (MWFPILTWLVATAVA). An MRH domain is found at 16-167 (LDCSAKDLDS…QVKSKAACVT (152 aa)). Over 16-184 (LDCSAKDLDS…PKKPEDNGES (169 aa)) the chain is Lumenal. Intrachain disulfides connect Cys-18-Cys-57, Cys-68-Cys-75, and Cys-135-Cys-165. The chain crosses the membrane as a helical span at residues 185–205 (WGWFTWIFIFMVLFLSIYIIG). Over 206–259 (GAWFQYNKGNAIDFQSALREVLENFVDLVRGLPSFIREIIEKVTGSNRGEYSAV) the chain is Cytoplasmic.

Belongs to the ATG27 family.

It localises to the cytoplasmic vesicle membrane. It is found in the golgi apparatus membrane. The protein resides in the mitochondrion membrane. The protein localises to the preautophagosomal structure membrane. Effector of VPS34 phosphatidylinositol 3-phosphate kinase signaling. Regulates the cytoplasm to vacuole transport (Cvt) vesicle formation. Plays a role in ATG protein retrieval from the pre-autophagosomal structure (PAS) and is especially required for autophagy-dependent cycling of ATG9. This is Autophagy-related protein 27 (ATG27) from Meyerozyma guilliermondii (strain ATCC 6260 / CBS 566 / DSM 6381 / JCM 1539 / NBRC 10279 / NRRL Y-324) (Yeast).